The sequence spans 319 residues: Annexin A4 (319 aa).

Ala2 carries the post-translational modification N-acetylalanine. Residue Thr7 is modified to Phosphothreonine. Ser12 is modified (phosphoserine). Annexin repeat units follow at residues 14–85, 86–157, 169–241, and 245–316; these read FSAT…GMIT, PTVL…SLSA, ALMR…AIVK, and NKSA…ILCG. Residues Lys213, Lys293, and Lys300 each carry the N6-acetyllysine modification.

Belongs to the annexin family. As to expression, expressed in pancreas (at protein level). Also detected in liver, spleen, intestine, stomach, kidney, and adrenal glands.

The protein resides in the zymogen granule membrane. Functionally, calcium/phospholipid-binding protein which promotes membrane fusion and is involved in exocytosis. The chain is Annexin A4 (ANXA4) from Canis lupus familiaris (Dog).